Here is a 271-residue protein sequence, read N- to C-terminus: Thiazole synthase (271 aa).

Lys-95 functions as the Schiff-base intermediate with DXP in the catalytic mechanism. 1-deoxy-D-xylulose 5-phosphate-binding positions include Gly-156, 182–183 (AG), and 204–205 (NT).

This sequence belongs to the ThiG family. As to quaternary structure, homotetramer. Forms heterodimers with either ThiH or ThiS.

The protein localises to the cytoplasm. The enzyme catalyses [ThiS sulfur-carrier protein]-C-terminal-Gly-aminoethanethioate + 2-iminoacetate + 1-deoxy-D-xylulose 5-phosphate = [ThiS sulfur-carrier protein]-C-terminal Gly-Gly + 2-[(2R,5Z)-2-carboxy-4-methylthiazol-5(2H)-ylidene]ethyl phosphate + 2 H2O + H(+). The protein operates within cofactor biosynthesis; thiamine diphosphate biosynthesis. Its function is as follows. Catalyzes the rearrangement of 1-deoxy-D-xylulose 5-phosphate (DXP) to produce the thiazole phosphate moiety of thiamine. Sulfur is provided by the thiocarboxylate moiety of the carrier protein ThiS. In vitro, sulfur can be provided by H(2)S. The polypeptide is Thiazole synthase (Yersinia pseudotuberculosis serotype O:3 (strain YPIII)).